A 64-amino-acid polypeptide reads, in one-letter code: Protein YnhH (64 aa).

This is Protein YnhH from Escherichia coli (strain K12).